The primary structure comprises 669 residues: Major S-layer protein (669 aa).

The first 24 residues, Met-1–Ala-24, serve as a signal peptide directing secretion. N-linked (GlcNAc...) asparagine glycosylation is found at Asn-36, Asn-70, Asn-116, Asn-600, and Asn-607. Residues Asp-588–Gly-648 form a disordered region. Over residues Glu-590–Thr-627 the composition is skewed to acidic residues. A helical transmembrane segment spans residues Thr-645 to Val-665.

This sequence belongs to the Methanosarcinales S-layer protein family. Post-translationally, glycosylated.

It localises to the secreted. It is found in the cell wall. The protein localises to the S-layer. The protein resides in the cell membrane. In terms of biological role, S-layer protein. The S-layer is a paracrystalline mono-layered assembly of proteins which coat the surface of the cell. The protein is Major S-layer protein of Methanosarcina mazei (strain ATCC BAA-159 / DSM 3647 / Goe1 / Go1 / JCM 11833 / OCM 88) (Methanosarcina frisia).